We begin with the raw amino-acid sequence, 474 residues long: ATP synthase subunit beta (474 aa).

Residue 153–160 (GGAGVGKT) participates in ATP binding.

The protein belongs to the ATPase alpha/beta chains family. In terms of assembly, F-type ATPases have 2 components, CF(1) - the catalytic core - and CF(0) - the membrane proton channel. CF(1) has five subunits: alpha(3), beta(3), gamma(1), delta(1), epsilon(1). CF(0) has three main subunits: a(1), b(2) and c(9-12). The alpha and beta chains form an alternating ring which encloses part of the gamma chain. CF(1) is attached to CF(0) by a central stalk formed by the gamma and epsilon chains, while a peripheral stalk is formed by the delta and b chains.

The protein resides in the cell inner membrane. The catalysed reaction is ATP + H2O + 4 H(+)(in) = ADP + phosphate + 5 H(+)(out). Produces ATP from ADP in the presence of a proton gradient across the membrane. The catalytic sites are hosted primarily by the beta subunits. This chain is ATP synthase subunit beta, found in Rickettsia typhi (strain ATCC VR-144 / Wilmington).